The following is a 411-amino-acid chain: D-ribitol-5-phosphate cytidylyltransferase (411 aa).

The protein belongs to the IspD/TarI cytidylyltransferase family. IspD subfamily. As to quaternary structure, homodimer.

It is found in the cytoplasm. Its subcellular location is the cytosol. The catalysed reaction is D-ribitol 5-phosphate + CTP + H(+) = CDP-L-ribitol + diphosphate. It catalyses the reaction D-ribose 5-phosphate + CTP + H(+) = CDP-D-ribose + diphosphate. It carries out the reaction D-ribulose 5-phosphate + CTP + H(+) = CDP-D-ribulose + diphosphate. It participates in protein modification; protein glycosylation. In terms of biological role, cytidylyltransferase required for protein O-linked mannosylation. Catalyzes the formation of CDP-ribitol nucleotide sugar from D-ribitol 5-phosphate. CDP-ribitol is a substrate of FKTN during the biosynthesis of the phosphorylated O-mannosyl trisaccharide (N-acetylgalactosamine-beta-3-N-acetylglucosamine-beta-4-(phosphate-6-)mannose), a carbohydrate structure present in alpha-dystroglycan (DAG1), which is required for binding laminin G-like domain-containing extracellular proteins with high affinity. Shows activity toward other pentose phosphate sugars and mediates formation of CDP-ribulose or CDP-ribose using CTP and ribulose-5-phosphate or ribose-5-phosphate, respectively. Not involved in dolichol production. The sequence is that of D-ribitol-5-phosphate cytidylyltransferase (crppa) from Xenopus tropicalis (Western clawed frog).